Consider the following 70-residue polypeptide: Conotoxin ba3a (70 aa).

The N-terminal stretch at Met1–Leu20 is a signal peptide. The propeptide occupies Gln21–Arg55.

Expressed by the venom duct.

Its subcellular location is the secreted. The polypeptide is Conotoxin ba3a (Conus bayani (Bayan's cone)).